The primary structure comprises 193 residues: Ribonuclease HII (193 aa).

The RNase H type-2 domain maps to 15 to 193 (CIVAGIDEAG…PYHRRSFRCC (179 aa)). Positions 21, 22, and 112 each coordinate a divalent metal cation.

It belongs to the RNase HII family. It depends on Mn(2+) as a cofactor. Mg(2+) serves as cofactor.

The protein resides in the cytoplasm. It catalyses the reaction Endonucleolytic cleavage to 5'-phosphomonoester.. Endonuclease that specifically degrades the RNA of RNA-DNA hybrids. The sequence is that of Ribonuclease HII from Rickettsia africae (strain ESF-5).